The following is a 115-amino-acid chain: Large ribosomal subunit protein bL19 (115 aa).

This sequence belongs to the bacterial ribosomal protein bL19 family. As to quaternary structure, part of the 50S ribosomal subunit.

This protein is located at the 30S-50S ribosomal subunit interface and may play a role in the structure and function of the aminoacyl-tRNA binding site. The protein is Large ribosomal subunit protein bL19 (rplS) of Bacillus subtilis (strain 168).